The primary structure comprises 111 residues: Probable 4-amino-4-deoxy-L-arabinose-phosphoundecaprenol flippase subunit ArnE (111 aa).

3 helical membrane passes run 39–59 (WLAISLLLLGGAMLVWLWVLQ), 61–81 (VPVGIAYPMFSLNFVLVTLAA), and 89–109 (VSLRHGCGLLLIVAGVMCMGV). In terms of domain architecture, EamA spans 40 to 109 (LAISLLLLGG…IVAGVMCMGV (70 aa)).

This sequence belongs to the ArnE family. Heterodimer of ArnE and ArnF.

The protein localises to the cell inner membrane. It participates in bacterial outer membrane biogenesis; lipopolysaccharide biosynthesis. Functionally, translocates 4-amino-4-deoxy-L-arabinose-phosphoundecaprenol (alpha-L-Ara4N-phosphoundecaprenol) from the cytoplasmic to the periplasmic side of the inner membrane. The protein is Probable 4-amino-4-deoxy-L-arabinose-phosphoundecaprenol flippase subunit ArnE of Sodalis glossinidius (strain morsitans).